The sequence spans 292 residues: 4-hydroxybenzoate octaprenyltransferase (292 aa).

Helical transmembrane passes span 20–40 (IGIL…ADGM), 43–63 (PMIL…GCAI), 94–114 (LLIA…LNLL), 135–155 (FFAM…PMAF), 160–180 (GTVP…VIAY), 209–229 (VAGI…AGIL), 234–254 (IWFY…YGMI), and 266–286 (FLHN…DTLF).

The protein belongs to the UbiA prenyltransferase family. It depends on Mg(2+) as a cofactor.

The protein resides in the cell inner membrane. It catalyses the reaction all-trans-octaprenyl diphosphate + 4-hydroxybenzoate = 4-hydroxy-3-(all-trans-octaprenyl)benzoate + diphosphate. It participates in cofactor biosynthesis; ubiquinone biosynthesis. Its function is as follows. Catalyzes the prenylation of para-hydroxybenzoate (PHB) with an all-trans polyprenyl group. Mediates the second step in the final reaction sequence of ubiquinone-8 (UQ-8) biosynthesis, which is the condensation of the polyisoprenoid side chain with PHB, generating the first membrane-bound Q intermediate 3-octaprenyl-4-hydroxybenzoate. The sequence is that of 4-hydroxybenzoate octaprenyltransferase from Nitrosomonas europaea (strain ATCC 19718 / CIP 103999 / KCTC 2705 / NBRC 14298).